The following is a 326-amino-acid chain: MDVVNACRAFVKVSERGSFTVGAAAAQMSQSVASRRVAALEKHFGERLFDRASRRPSLTPFGRDMLPAARRLVRVADVLEDEARAARSRPMRLAVPASCTTAELARLVADSRERDIRLDVRTAGPEQRAELVRTQEVRAGLLAVPPDQALWAVPLGLAGADEPQTRRVFVESLRLRRGEPGPARCIRVQPEDDVPHIQGRLARLRDAVGLRPAQLSVAPDLTSATADVLSSDDLLLCSPAQAAELGLYWRPVGELRLARGYVLDAAVEADAERLRGRLAPYLARALGATADHGPDPATGAGPGADAGTEPGARAEPGAPEEGAQAC.

One can recognise an HTH lysR-type domain in the interval 1 to 59; that stretch reads MDVVNACRAFVKVSERGSFTVGAAAAQMSQSVASRRVAALEKHFGERLFDRASRRPSLT. Residues 19 to 38 constitute a DNA-binding region (H-T-H motif); that stretch reads FTVGAAAAQMSQSVASRRVA. The disordered stretch occupies residues 289 to 326; that stretch reads TADHGPDPATGAGPGADAGTEPGARAEPGAPEEGAQAC. Positions 295–326 are enriched in low complexity; that stretch reads DPATGAGPGADAGTEPGARAEPGAPEEGAQAC.

Belongs to the LysR transcriptional regulatory family.

Positive regulator of the expression of the gene (blaB) for beta-lactamase. It binds to the blaL-blaA intercistronic region. This chain is HTH-type transcriptional regulator BlaA (blaA), found in Streptomyces cacaoi.